The following is a 61-amino-acid chain: Small ribosomal subunit protein uS14 (61 aa).

Residues cysteine 24, cysteine 27, cysteine 40, and cysteine 43 each coordinate Zn(2+).

Belongs to the universal ribosomal protein uS14 family. Zinc-binding uS14 subfamily. Part of the 30S ribosomal subunit. Contacts proteins S3 and S10. Zn(2+) is required as a cofactor.

Functionally, binds 16S rRNA, required for the assembly of 30S particles and may also be responsible for determining the conformation of the 16S rRNA at the A site. This Parafrankia sp. (strain EAN1pec) protein is Small ribosomal subunit protein uS14.